Consider the following 238-residue polypeptide: MRPSGRSAQQVRPVTLTRHYTKHAEGSVLVEFGDTKVLCTATIEEGVPRFLKGKGQGWVTAEYGMLPRATHSRNAREAAKGKQGGRTLEIQRLIARSLRAAIDLKVLGEFTITLDCDVLQADGGTRTASITGACVALADALNHLVSTGKLKANPMKGMVAAISVGIVNGEALCDLEYVEDAAAETDMNVVMTEDGRMIEVQGTAEGEPFSHEELLKLLELARGGIDTLVAAQKAALTD.

Residues arginine 86 and 124–126 contribute to the phosphate site; that span reads GTR.

This sequence belongs to the RNase PH family. Homohexameric ring arranged as a trimer of dimers.

It carries out the reaction tRNA(n+1) + phosphate = tRNA(n) + a ribonucleoside 5'-diphosphate. In terms of biological role, phosphorolytic 3'-5' exoribonuclease that plays an important role in tRNA 3'-end maturation. Removes nucleotide residues following the 3'-CCA terminus of tRNAs; can also add nucleotides to the ends of RNA molecules by using nucleoside diphosphates as substrates, but this may not be physiologically important. Probably plays a role in initiation of 16S rRNA degradation (leading to ribosome degradation) during starvation. This chain is Ribonuclease PH, found in Erwinia tasmaniensis (strain DSM 17950 / CFBP 7177 / CIP 109463 / NCPPB 4357 / Et1/99).